A 470-amino-acid polypeptide reads, in one-letter code: Poly(A) polymerase catalytic subunit (470 aa).

Residues Asp192 and Asp194 contribute to the active site.

The protein belongs to the poxviridae poly(A) polymerase catalytic subunit family. As to quaternary structure, heterodimer of a large (catalytic) subunit and a small (regulatory) subunit.

It carries out the reaction RNA(n) + ATP = RNA(n)-3'-adenine ribonucleotide + diphosphate. Polymerase that creates the 3'-poly(A) tail of mRNA's. The protein is Poly(A) polymerase catalytic subunit (PAPL) of Deerpox virus (strain Mule deer/United States/W-848-83/1983) (DPV).